Reading from the N-terminus, the 148-residue chain is MKVILKADVKALGKKGQVYEVSDGYARNFLFPKGLAVEATSGNLNDLASKKANEEKKKEQEKQEAQTLAAKLSSLSIEIHTKSGEGGRLFGSVTNKEIAEALKASHGINLDRRKLELKEPIKALGTFNVQAKLHPEVTAQFQVHVKAS.

It belongs to the bacterial ribosomal protein bL9 family.

Its function is as follows. Binds to the 23S rRNA. The polypeptide is Large ribosomal subunit protein bL9 (Desulfitobacterium hafniense (strain DSM 10664 / DCB-2)).